Consider the following 843-residue polypeptide: Protein P (843 aa).

The terminal protein domain (TP) stretch occupies residues 1 to 177; sequence MPLSYPHFRK…FCGSPYSWEQ (177 aa). The segment at 178-346 is spacer; the sequence is ELQHGSTSLN…YCLSHIINLL (169 aa). Disordered stretches follow at residues 228-259 and 283-314; these read KQGQLANGKQGRSGRLRSRVHTPTRWPAGVEP and EKANPSLSTSKRHTSTGNAVELNPVPPSSVGS. Basic residues predominate over residues 239–249; the sequence is RSGRLRSRVHT. The segment at 347-690 is polymerase/reverse transcriptase domain (RT); that stretch reads EDWGPCYEHG…YMNLYPVARQ (344 aa). One can recognise a Reverse transcriptase domain in the interval 357 to 600; it reads QHYIRTPRTP…YSLHFMGYVI (244 aa). 3 residues coordinate Mg(2+): aspartate 429, aspartate 551, and aspartate 552.

This sequence belongs to the hepadnaviridae P protein family.

The catalysed reaction is DNA(n) + a 2'-deoxyribonucleoside 5'-triphosphate = DNA(n+1) + diphosphate. It catalyses the reaction Endonucleolytic cleavage to 5'-phosphomonoester.. Activated by host HSP70 and HSP40 in vitro to be able to bind the epsilon loop of the pgRNA. Because deletion of the RNase H region renders the protein partly chaperone-independent, the chaperones may be needed indirectly to relieve occlusion of the RNA-binding site by this domain. Inhibited by several reverse-transcriptase inhibitors: Lamivudine, Adefovir and Entecavir. Multifunctional enzyme that converts the viral RNA genome into dsDNA in viral cytoplasmic capsids. This enzyme displays a DNA polymerase activity that can copy either DNA or RNA templates, and a ribonuclease H (RNase H) activity that cleaves the RNA strand of RNA-DNA heteroduplexes in a partially processive 3'- to 5'-endonucleasic mode. Neo-synthesized pregenomic RNA (pgRNA) are encapsidated together with the P protein, and reverse-transcribed inside the nucleocapsid. Initiation of reverse-transcription occurs first by binding the epsilon loop on the pgRNA genome, and is initiated by protein priming, thereby the 5'-end of (-)DNA is covalently linked to P protein. Partial (+)DNA is synthesized from the (-)DNA template and generates the relaxed circular DNA (RC-DNA) genome. After budding and infection, the RC-DNA migrates in the nucleus, and is converted into a plasmid-like covalently closed circular DNA (cccDNA). The activity of P protein does not seem to be necessary for cccDNA generation, and is presumably released from (+)DNA by host nuclear DNA repair machinery. This is Protein P from Homo sapiens (Human).